Reading from the N-terminus, the 275-residue chain is Protein rolling stone (275 aa).

The next 6 helical transmembrane spans lie at 45–65 (LLYR…CVIV), 72–92 (FFIY…LISA), 127–147 (WLYN…WVFL), 162–182 (IITH…IAFP), 185–205 (ILHM…TLIY), and 232–252 (MVTF…LFGL).

Expressed in cells of the somatic mesoderm, most notably the muscle founder cells, between embryonic stages 12 and 14, in growing muscle fibers in dorsal, lateral and ventral positions. At stage 16 strongest expression is in some ventral muscles and muscle 8. At stages 16/17 expression is restricted to some cells of the CNS, the brain and the gonads.

It localises to the membrane. In terms of biological role, may have a central role in the fusion process during myogenesis, within the somatic mesoderm. This is Protein rolling stone (rost) from Drosophila melanogaster (Fruit fly).